A 91-amino-acid polypeptide reads, in one-letter code: Large ribosomal subunit protein bL27 (91 aa).

The segment at 1–21 is disordered; the sequence is MAHKKSGGSSRNGRDSAGRRL.

Belongs to the bacterial ribosomal protein bL27 family.

The chain is Large ribosomal subunit protein bL27 from Phenylobacterium zucineum (strain HLK1).